A 116-amino-acid chain; its full sequence is uncharacterized protein (116 aa).

The interval Ser77–Arg116 is disordered.

This is an uncharacterized protein from Frog virus 3 (isolate Goorha) (FV-3).